Consider the following 84-residue polypeptide: Putative membrane protein insertion efficiency factor (84 aa).

The interval 64–84 (GGSGYDPPPPRHQPRKWKCEE) is disordered. Positions 75–84 (HQPRKWKCEE) are enriched in basic residues.

The protein belongs to the UPF0161 family.

The protein resides in the cell inner membrane. Functionally, could be involved in insertion of integral membrane proteins into the membrane. The sequence is that of Putative membrane protein insertion efficiency factor from Caulobacter vibrioides (strain ATCC 19089 / CIP 103742 / CB 15) (Caulobacter crescentus).